We begin with the raw amino-acid sequence, 1390 residues long: DNA-directed RNA polymerase subunit beta'' (1390 aa).

Zn(2+) contacts are provided by Cys-224, Cys-295, Cys-302, and Cys-305.

It belongs to the RNA polymerase beta' chain family. RpoC2 subfamily. As to quaternary structure, in plastids the minimal PEP RNA polymerase catalytic core is composed of four subunits: alpha, beta, beta', and beta''. When a (nuclear-encoded) sigma factor is associated with the core the holoenzyme is formed, which can initiate transcription. Requires Zn(2+) as cofactor.

It localises to the plastid. The protein resides in the chloroplast. It carries out the reaction RNA(n) + a ribonucleoside 5'-triphosphate = RNA(n+1) + diphosphate. DNA-dependent RNA polymerase catalyzes the transcription of DNA into RNA using the four ribonucleoside triphosphates as substrates. In Daucus carota (Wild carrot), this protein is DNA-directed RNA polymerase subunit beta''.